We begin with the raw amino-acid sequence, 275 residues long: MAVVKTKPTSAGRRHVVKVVSDELHKGRPYDGLLEKKSKSGGRNNNGRITTRHVGGGHRQHYRVVDFKRNKDGIAATVERLEYDPNRSANIALLKYLDGERRYIIAPRGVKVGDSLESGVNAAIKRGNALPLRNIPVGSTVHCIELKPGKGAQIARSAGASAQLVAREGNYATVRLRSGEMRKILAECRATLGEVGNSEHSLRQLGKAGAKRWRGVRPTVRGVAMNPVDHPHGGGEGRTSGGRHPVSPWGIPTKGHKTRKNKRTDKLIVRRRKAK.

Positions 28–38 (RPYDGLLEKKS) are enriched in basic and acidic residues. Disordered stretches follow at residues 28–58 (RPYD…GGGH) and 223–275 (VAMN…RKAK). Basic residues predominate over residues 254-275 (KGHKTRKNKRTDKLIVRRRKAK).

The protein belongs to the universal ribosomal protein uL2 family. As to quaternary structure, part of the 50S ribosomal subunit. Forms a bridge to the 30S subunit in the 70S ribosome.

Functionally, one of the primary rRNA binding proteins. Required for association of the 30S and 50S subunits to form the 70S ribosome, for tRNA binding and peptide bond formation. It has been suggested to have peptidyltransferase activity; this is somewhat controversial. Makes several contacts with the 16S rRNA in the 70S ribosome. This chain is Large ribosomal subunit protein uL2, found in Chromohalobacter salexigens (strain ATCC BAA-138 / DSM 3043 / CIP 106854 / NCIMB 13768 / 1H11).